The chain runs to 530 residues: Cytochrome P450 2U1 (530 aa).

A run of 4 helical transmembrane segments spans residues 21 to 41, 99 to 119, 247 to 267, and 328 to 348; these read VRAT…GWVW, VYGN…LSDF, ICLH…YLPF, and LFYI…NSLL. Position 476 (C476) interacts with heme. Residues 481 to 501 form a helical membrane-spanning segment; the sequence is LAKMELFLMFVSLMQTFTFAL.

Belongs to the cytochrome P450 family. It depends on heme as a cofactor. As to expression, widely expressed. Expressed in heart, brain and liver.

It is found in the endoplasmic reticulum membrane. Its subcellular location is the microsome membrane. The protein localises to the mitochondrion inner membrane. It carries out the reaction an omega-methyl-long-chain fatty acid + reduced [NADPH--hemoprotein reductase] + O2 = an omega-hydroxy-long-chain fatty acid + oxidized [NADPH--hemoprotein reductase] + H2O + H(+). The enzyme catalyses (5Z,8Z,11Z,14Z)-eicosatetraenoate + reduced [NADPH--hemoprotein reductase] + O2 = 19-hydroxy-(5Z,8Z,11Z,14Z)-eicosatetraenoate + oxidized [NADPH--hemoprotein reductase] + H2O + H(+). The catalysed reaction is (5Z,8Z,11Z,14Z)-eicosatetraenoate + reduced [NADPH--hemoprotein reductase] + O2 = 20-hydroxy-(5Z,8Z,11Z,14Z)-eicosatetraenoate + oxidized [NADPH--hemoprotein reductase] + H2O + H(+). It catalyses the reaction N-[(5Z,8Z,11Z,14Z)-eicosatetraenoyl]-serotonin + reduced [NADPH--hemoprotein reductase] + O2 = 2-oxo-N-[(5Z,8Z,11Z,14Z)-eicosatetraenoyl]-serotonin + oxidized [NADPH--hemoprotein reductase] + H2O + H(+). In terms of biological role, a cytochrome P450 monooxygenase involved in the metabolism of arachidonic acid and its conjugates. Mechanistically, uses molecular oxygen inserting one oxygen atom into a substrate, and reducing the second into a water molecule, with two electrons provided by NADPH via cytochrome P450 reductase (CPR; NADPH-ferrihemoprotein reductase). Acts as an omega and omega-1 hydroxylase for arachidonic acid and possibly for other long chain fatty acids. May modulate the arachidonic acid signaling pathway and play a role in other fatty acid signaling processes. May down-regulate the biological activities of N-arachidonoyl-serotonin, an endocannabinoid that has anti-nociceptive effects through inhibition of fatty acid amide hydrolase FAAH, TRPV1 receptor and T-type calcium channels. Catalyzes C-2 oxidation of the indole ring of N-arachidonoyl-serotonin forming a less active product 2-oxo-N-arachidonoyl-serotonin. This chain is Cytochrome P450 2U1, found in Mus musculus (Mouse).